Reading from the N-terminus, the 337-residue chain is tRNA N6-adenosine threonylcarbamoyltransferase (337 aa).

Residues H114 and H118 each contribute to the Fe cation site. Substrate contacts are provided by residues 136–140 (LVSGG), D169, G182, D186, and N275. D301 contacts Fe cation.

It belongs to the KAE1 / TsaD family. Requires Fe(2+) as cofactor.

The protein resides in the cytoplasm. The catalysed reaction is L-threonylcarbamoyladenylate + adenosine(37) in tRNA = N(6)-L-threonylcarbamoyladenosine(37) in tRNA + AMP + H(+). In terms of biological role, required for the formation of a threonylcarbamoyl group on adenosine at position 37 (t(6)A37) in tRNAs that read codons beginning with adenine. Is involved in the transfer of the threonylcarbamoyl moiety of threonylcarbamoyl-AMP (TC-AMP) to the N6 group of A37, together with TsaE and TsaB. TsaD likely plays a direct catalytic role in this reaction. The protein is tRNA N6-adenosine threonylcarbamoyltransferase of Streptococcus thermophilus (strain CNRZ 1066).